The sequence spans 1107 residues: uncharacterized protein (1107 aa).

Positions 180–204 (SGNGSSGGNNNNNNNSLNNSNNSIG) are enriched in low complexity. 2 disordered regions span residues 180–251 (SGNG…SGNN) and 501–530 (LMNI…DNQM). The segment covering 205 to 215 (SSGGNGGGGSN) has biased composition (gly residues). Residues 219-237 (PSMSPQFTSISKTNSPQII) are compositionally biased toward polar residues. Composition is skewed to low complexity over residues 238 to 251 (NTSS…SGNN) and 501 to 521 (LMNI…NNND). 2 coiled-coil regions span residues 789-816 (KKDI…IYRE) and 940-1012 (NIDH…NMLK).

This is an uncharacterized protein from Dictyostelium discoideum (Social amoeba).